Reading from the N-terminus, the 113-residue chain is U11-theraphotoxin-Hhn1a (113 aa).

An N-terminal signal peptide occupies residues 1–21 (MNTVRVTFLPVFVLAVSLGQA). Residues 22-74 (DKDENRMEMQEKTEQGKSYLDFAENLLLQKLEELEAKLLEEDSEESRNSRQKR) constitute a propeptide that is removed on maturation. The interval 61–83 (EEDSEESRNSRQKRCIGEGVPCD) is disordered. Intrachain disulfides connect C75–C90, C82–C95, and C89–C110.

It belongs to the neurotoxin 14 (magi-1) family. 01 (HNTX-16) subfamily. Expressed by the venom gland.

The protein localises to the secreted. In Cyriopagopus hainanus (Chinese bird spider), this protein is U11-theraphotoxin-Hhn1a.